Here is a 470-residue protein sequence, read N- to C-terminus: N amino acid transport system protein (470 aa).

Residues 1–11 (MDSQYETKKND) show a composition bias toward basic and acidic residues. The segment at 1-21 (MDSQYETKKNDPNAIMPYPES) is disordered. Topologically, residues 1-56 (MDSQYETKKNDPNAIMPYPESNDEHVGEVRGLGGGIMDKEPEAQEGHAKFHRLGWK) are extracellular. 2 consecutive transmembrane segments (helical) span residues 57 to 77 (RLTVVLIVEAIALGSLSLPGA) and 78 to 98 (FATLGMVPGVILSVGMGLICI). The Extracellular portion of the chain corresponds to 99-131 (YTAHVIGQTKLKHPEIAHYADVGRVMFGRWGYE). Residues 132–152 (IISFMFVLQLIFIVGSHVLTG) traverse the membrane as a helical segment. Over 153–168 (TIMWGTITDNGNGTCS) the chain is Cytoplasmic. 2 helical membrane passes run 169–189 (LVFGIVSAIILFLLAIPPSFA) and 191–211 (VAILGYIDFVSICAAILITMI). The Cytoplasmic segment spans residues 212–236 (ATGIRSSHQEGGLAAVPWSCWPKED). A helical transmembrane segment spans residues 237–257 (LSLAEGFIAVSNIVFAYSFAM). Topologically, residues 258 to 275 (CQFSFMDEMHTPSDYKKS) are extracellular. A helical transmembrane segment spans residues 276-296 (IVALGLIEIFIYTVTGGVVYA). Topologically, residues 297–316 (FVGPEVQSPALLSAGPLLAK) are cytoplasmic. Residues 317-337 (VAFGIALPVIFISGSINTVVV) form a helical membrane-spanning segment. At 338-357 (SRYLIERIWPNNVIRYVNTP) the chain is on the extracellular side. A helical transmembrane segment spans residues 358 to 378 (AGWMVWLGFDFGITLIAWVIA). Residues 379–386 (EAIPFFSD) lie on the Cytoplasmic side of the membrane. The chain crosses the membrane as a helical span at residues 387–407 (LLAICSALFISGFSFYFPALM). Topologically, residues 408-427 (YFKITRNDAKSQGKKYFLDA) are extracellular. The helical transmembrane segment at 428–448 (LNMLCFVIGMGILGIGTYAAI) threads the bilayer. Residues 449-470 (QDIMDRYDHGKVSKPYSCAPLA) lie on the Cytoplasmic side of the membrane.

Belongs to the amino acid/polyamine transporter 2 family.

The protein resides in the membrane. In terms of biological role, required for the transport of neutral aliphatic and aromatic amino acids via the N system. This chain is N amino acid transport system protein (mtr), found in Neurospora crassa (strain ATCC 24698 / 74-OR23-1A / CBS 708.71 / DSM 1257 / FGSC 987).